Here is an 87-residue protein sequence, read N- to C-terminus: Small ribosomal subunit protein uS17 (87 aa).

It belongs to the universal ribosomal protein uS17 family. In terms of assembly, part of the 30S ribosomal subunit.

Its function is as follows. One of the primary rRNA binding proteins, it binds specifically to the 5'-end of 16S ribosomal RNA. The sequence is that of Small ribosomal subunit protein uS17 from Bacillus licheniformis (strain ATCC 14580 / DSM 13 / JCM 2505 / CCUG 7422 / NBRC 12200 / NCIMB 9375 / NCTC 10341 / NRRL NRS-1264 / Gibson 46).